Consider the following 412-residue polypeptide: Gamma-glutamyl phosphate reductase (412 aa).

The protein belongs to the gamma-glutamyl phosphate reductase family.

The protein localises to the cytoplasm. It carries out the reaction L-glutamate 5-semialdehyde + phosphate + NADP(+) = L-glutamyl 5-phosphate + NADPH + H(+). Its pathway is amino-acid biosynthesis; L-proline biosynthesis; L-glutamate 5-semialdehyde from L-glutamate: step 2/2. In terms of biological role, catalyzes the NADPH-dependent reduction of L-glutamate 5-phosphate into L-glutamate 5-semialdehyde and phosphate. The product spontaneously undergoes cyclization to form 1-pyrroline-5-carboxylate. The chain is Gamma-glutamyl phosphate reductase from Nitratiruptor sp. (strain SB155-2).